Reading from the N-terminus, the 476-residue chain is Glutamate--tRNA ligase (476 aa).

The 'HIGH' region motif lies at 9–19 (PSPTGKLHIGT). Over residues 109-129 (REEQKSRNKPPRYDNRHRSLS) the composition is skewed to basic and acidic residues. Residues 109-133 (REEQKSRNKPPRYDNRHRSLSTEEE) are disordered. The short motif at 248–252 (KLSKR) is the 'KMSKS' region element. Lys-251 is a binding site for ATP.

The protein belongs to the class-I aminoacyl-tRNA synthetase family. Glutamate--tRNA ligase type 1 subfamily. As to quaternary structure, monomer.

It localises to the cytoplasm. It catalyses the reaction tRNA(Glu) + L-glutamate + ATP = L-glutamyl-tRNA(Glu) + AMP + diphosphate. In terms of biological role, catalyzes the attachment of glutamate to tRNA(Glu) in a two-step reaction: glutamate is first activated by ATP to form Glu-AMP and then transferred to the acceptor end of tRNA(Glu). The chain is Glutamate--tRNA ligase from Prochlorococcus marinus (strain MIT 9211).